The primary structure comprises 243 residues: SSPEKKNDMSKPGRMRFDNKKEPRSSAKNSGNGYGCVDVNAGREPLTGPGKYPSSFLLLLEHRKPPDKDRDRWDNVKGCERKDGKSHWYDSMLKHRSPREKTLVGSGKDSTNFVYRLLTEPLLNERAGCKVVDMWYSLSYWMDVVNKRFGLCHYLGSMMDHGRWNDYSLCKDSYAGKHKPAGGPPTPRLKNREECKFYWCWSGSEERAGGMGREYVMHSGGLYGDLTDKRDDPEPNGNLEGGV.

Residues 1-25 (SSPEKKNDMSKPGRMRFDNKKEPRS) show a composition bias toward basic and acidic residues. Residues 1–48 (SSPEKKNDMSKPGRMRFDNKKEPRSSAKNSGNGYGCVDVNAGREPLTG) are disordered.

Post-translationally, contains disulfide bonds. As to expression, nematocytes.

It localises to the secreted. The protein localises to the nematocyst. The protein resides in the target cell membrane. Its function is as follows. Has potent hemolytic activity. Is lethal to crayfish. Causes cutaneous inflammation in humans. May act as a pore-forming toxin, disrupting normal transmembrane ion concentration gradients in susceptible cells. The chain is Toxin CcTX-1 from Cyanea capillata (Lion's mane jellyfish).